Reading from the N-terminus, the 156-residue chain is Ribosome maturation factor RimP (156 aa).

It belongs to the RimP family.

The protein resides in the cytoplasm. Functionally, required for maturation of 30S ribosomal subunits. In Lysinibacillus sphaericus (strain C3-41), this protein is Ribosome maturation factor RimP.